The primary structure comprises 379 residues: Anhydro-N-acetylmuramic acid kinase (379 aa).

Residue 9–16 participates in ATP binding; the sequence is GTSADGVD.

It belongs to the anhydro-N-acetylmuramic acid kinase family.

The catalysed reaction is 1,6-anhydro-N-acetyl-beta-muramate + ATP + H2O = N-acetyl-D-muramate 6-phosphate + ADP + H(+). It functions in the pathway amino-sugar metabolism; 1,6-anhydro-N-acetylmuramate degradation. Its pathway is cell wall biogenesis; peptidoglycan recycling. In terms of biological role, catalyzes the specific phosphorylation of 1,6-anhydro-N-acetylmuramic acid (anhMurNAc) with the simultaneous cleavage of the 1,6-anhydro ring, generating MurNAc-6-P. Is required for the utilization of anhMurNAc either imported from the medium or derived from its own cell wall murein, and thus plays a role in cell wall recycling. This chain is Anhydro-N-acetylmuramic acid kinase, found in Prochlorococcus marinus (strain MIT 9211).